The chain runs to 360 residues: D-alanine--D-alanine ligase (360 aa).

An ATP-grasp domain is found at 149–353 (KKLMAAEGLP…YEELLDVLVQ (205 aa)). An ATP-binding site is contributed by 176–231 (KNLLGLPVFVKPARGGSSIGISRVTAWEDFNKAVGLARAHDEKVIVESEIVGSEVE). Mg(2+)-binding residues include D308, E320, and N322.

This sequence belongs to the D-alanine--D-alanine ligase family. Mg(2+) serves as cofactor. Mn(2+) is required as a cofactor.

The protein localises to the cytoplasm. It catalyses the reaction 2 D-alanine + ATP = D-alanyl-D-alanine + ADP + phosphate + H(+). It participates in cell wall biogenesis; peptidoglycan biosynthesis. Its function is as follows. Cell wall formation. In Corynebacterium glutamicum (strain ATCC 13032 / DSM 20300 / JCM 1318 / BCRC 11384 / CCUG 27702 / LMG 3730 / NBRC 12168 / NCIMB 10025 / NRRL B-2784 / 534), this protein is D-alanine--D-alanine ligase.